Reading from the N-terminus, the 138-residue chain is D-ribose pyranase (138 aa).

H20 acts as the Proton donor in catalysis. Substrate-binding positions include D28, H105, and 127-129; that span reads YAN.

The protein belongs to the RbsD / FucU family. RbsD subfamily. Homodecamer.

It localises to the cytoplasm. The catalysed reaction is beta-D-ribopyranose = beta-D-ribofuranose. It participates in carbohydrate metabolism; D-ribose degradation; D-ribose 5-phosphate from beta-D-ribopyranose: step 1/2. Functionally, catalyzes the interconversion of beta-pyran and beta-furan forms of D-ribose. The polypeptide is D-ribose pyranase (Psychromonas ingrahamii (strain DSM 17664 / CCUG 51855 / 37)).